A 456-amino-acid polypeptide reads, in one-letter code: METIKKNEVKTGKVIDLTHEGHGVVKVDRYPIFIPNALIDEEIKFKLIKVKKNFAIGKLIEVISESDDRVTPPCIYYAKCGGCQLQHMTYRAQLDMKREQVVNLFHRKGPFENTVIKETIGMVNPWRYRNKSQIPVGQSNSNQVIMGFYRQRSHDIIDMDSCLIQDRQHQEVMNRVKYWLNELNISIYNEKTKTGLIRHLVVRTGYHTDEMMVIFVTNGATFKQSELLVNKLKKEFPNITSIKQNINNSHSNVIMGRQSMTLYGKDKIEDQLSEVTYHISDLSFYQINSSQTEKLYQQALNYAQLTGKEIVLDTYCGIGTIGLYMAPLAKHVYGVEVVPQAIKDAEDNATKNQLKNTTFECGKAEDVILTWKSQGIKPGVVMVDPPRKGCDETFLTTLLKLNPKRIVYISCNPSTQQRDAQILAEQYELVEITPVDMFPQTTHIETVALFVRKDEE.

In terms of domain architecture, TRAM spans 3–61; sequence TIKKNEVKTGKVIDLTHEGHGVVKVDRYPIFIPNALIDEEIKFKLIKVKKNFAIGKLIE. Residues Cys74, Cys80, Cys83, and Cys162 each coordinate [4Fe-4S] cluster. Residues Gln286, Tyr315, Glu336, and Asp384 each coordinate S-adenosyl-L-methionine. Catalysis depends on Cys411, which acts as the Nucleophile.

Belongs to the class I-like SAM-binding methyltransferase superfamily. RNA M5U methyltransferase family.

This is an uncharacterized protein from Staphylococcus epidermidis (strain ATCC 35984 / DSM 28319 / BCRC 17069 / CCUG 31568 / BM 3577 / RP62A).